Reading from the N-terminus, the 1315-residue chain is Chaoptin (1315 aa).

The first 29 residues, M1–A29, serve as a signal peptide directing secretion. N77 is a glycosylation site (N-linked (GlcNAc...) (high mannose) asparagine; alternate). An N-linked (GlcNAc...) (paucimannose) asparagine; alternate glycan is attached at N77. LRR repeat units follow at residues K80 to S101, G103 to G124, S128 to H149, K152 to G173, S177 to G198, I201 to D222, R226 to P247, S250 to E271, and N279 to Y300. N-linked (GlcNAc...) (paucimannose) asparagine; alternate glycosylation is present at N267. N267 carries an N-linked (GlcNAc...) (complex) asparagine; alternate glycan. N-linked (GlcNAc...) (high mannose) asparagine; alternate glycosylation occurs at N305. N305 is a glycosylation site (N-linked (GlcNAc...) (paucimannose) asparagine; alternate). LRR repeat units lie at residues R326–S347, S351–N372, V375–N396, T401–T424, G477–E498, S527–F548, N551–G572, K577–D598, A601–N622, E625–N646, K649–Q670, N676–S696, N708–P729, S733–N754, H757–N778, Q781–P802, G805–N826, G828–S849, T854–N875, S879–T900, K903–G924, S928–K948, Y949–N970, N973–L994, H996–G1017, D1021–P1044, and H1045–L1066. The N-linked (GlcNAc...) (high mannose) asparagine glycan is linked to N361. The N-linked (GlcNAc...) asparagine glycan is linked to N422. An N-linked (GlcNAc...) (high mannose) asparagine glycan is attached at N680. N-linked (GlcNAc...) (high mannose) asparagine; alternate glycosylation is present at N692. An N-linked (GlcNAc...) (paucimannose) asparagine; alternate glycan is attached at N692. Residue N718 is glycosylated (N-linked (GlcNAc...) (high mannose) asparagine). A glycan (N-linked (GlcNAc...) asparagine) is linked at N746. The N-linked (GlcNAc...) (high mannose) asparagine glycan is linked to N936. N-linked (GlcNAc...) (paucimannose) asparagine glycosylation occurs at N970. N1012 carries an N-linked (GlcNAc...) (complex) asparagine glycan. 3 N-linked (GlcNAc...) (high mannose) asparagine glycosylation sites follow: N1122, N1152, and N1171. The LRRCT domain maps to T1211–N1274.

The protein belongs to the chaoptin family. As to expression, expressed in photoreceptor cells and their axons in the adult retina, the ocellus and larval photoreceptor organ.

It localises to the cell membrane. In terms of biological role, required for photoreceptor cell morphogenesis. Mediates homophilic cellular adhesion. This is Chaoptin (chp) from Drosophila melanogaster (Fruit fly).